The following is a 134-amino-acid chain: Transcription antitermination protein NusB (134 aa).

This sequence belongs to the NusB family.

Functionally, involved in transcription antitermination. Required for transcription of ribosomal RNA (rRNA) genes. Binds specifically to the boxA antiterminator sequence of the ribosomal RNA (rrn) operons. The chain is Transcription antitermination protein NusB from Shewanella frigidimarina (strain NCIMB 400).